A 92-amino-acid chain; its full sequence is Small ribosomal subunit protein uS19 (92 aa).

This sequence belongs to the universal ribosomal protein uS19 family.

Functionally, protein S19 forms a complex with S13 that binds strongly to the 16S ribosomal RNA. The polypeptide is Small ribosomal subunit protein uS19 (Sodalis glossinidius (strain morsitans)).